Reading from the N-terminus, the 1065-residue chain is FERM, ARHGEF and pleckstrin domain-containing protein 2 (1065 aa).

The FERM domain occupies 44–324 (MRIRVKLLDS…EYHTFFRLSD (281 aa)). Residues Ser389 and Ser440 each carry the phosphoserine modification. Disordered stretches follow at residues 406 to 489 (SFYP…LKSH) and 504 to 534 (EQGASPVLSPVLSGAGTARMDNQEEQKHKHM). Over residues 440–459 (STAAERSSGPSSSDGPSTQS) the composition is skewed to low complexity. The segment covering 524–534 (DNQEEQKHKHM) has biased composition (basic and acidic residues). Positions 538–729 (EAYFIAKEIL…TEVTTELQQS (192 aa)) constitute a DH domain. The PH 1 domain maps to 758–855 (EFIREGCLHK…WMQDLNAAIQ (98 aa)). 2 positions are modified to phosphoserine: Ser863 and Ser880. The segment at 874 to 902 (TRTPRSSDEVSLEESEDGRGNRGSLEGNS) is disordered. One can recognise a PH 2 domain in the interval 930 to 1027 (ENQLSGYLLR…WMDVIKRASS (98 aa)).

In terms of assembly, interacts with PLXNA1. Interaction with PLXNA1 or PIP5K1C lowers its guanine nucleotide exchange activity. Dissociates from PLXNA1 when SEMA3A binds to the receptor. Interacts with PIP5K1C via its FERM domain. The interaction with PIP5K1C is enhanced by SEMA3A binding. Interacts with RAC1. In terms of tissue distribution, detected in adult brain, lung and testis. Detected in embryonic hippocampus and brain cortex.

Functionally, functions as a guanine nucleotide exchange factor that activates RAC1. May have relatively low activity. Plays a role in the response to class 3 semaphorins and remodeling of the actin cytoskeleton. Plays a role in TNFSF11-mediated osteoclast differentiation, especially in podosome rearrangement and reorganization of the actin cytoskeleton. Regulates the activation of ITGB3, integrin signaling and cell adhesion. The protein is FERM, ARHGEF and pleckstrin domain-containing protein 2 (Farp2) of Mus musculus (Mouse).